A 251-amino-acid chain; its full sequence is 2,3-bisphosphoglycerate-dependent phosphoglycerate mutase (251 aa).

Substrate contacts are provided by residues 11–18 (RHGNSDWN), 24–25 (TG), R63, 90–93 (ERHY), K101, 117–118 (RR), and 185–186 (GN). H12 (tele-phosphohistidine intermediate) is an active-site residue. Catalysis depends on E90, which acts as the Proton donor/acceptor. The tract at residues 117–142 (RRSFDVPPPPIDDDDEYSQSRDPRYA) is disordered.

It belongs to the phosphoglycerate mutase family. BPG-dependent PGAM subfamily.

It carries out the reaction (2R)-2-phosphoglycerate = (2R)-3-phosphoglycerate. It participates in carbohydrate degradation; glycolysis; pyruvate from D-glyceraldehyde 3-phosphate: step 3/5. Catalyzes the interconversion of 2-phosphoglycerate and 3-phosphoglycerate. The protein is 2,3-bisphosphoglycerate-dependent phosphoglycerate mutase of Clavibacter michiganensis subsp. michiganensis (strain NCPPB 382).